A 264-amino-acid polypeptide reads, in one-letter code: Glucosamine-6-phosphate deaminase (264 aa).

The Proton acceptor; for enolization step role is filled by Asp-72. Catalysis depends on Asp-141, which acts as the For ring-opening step. His-143 serves as the catalytic Proton acceptor; for ring-opening step. Glu-148 acts as the For ring-opening step in catalysis.

This sequence belongs to the glucosamine/galactosamine-6-phosphate isomerase family. NagB subfamily. Homohexamer.

The catalysed reaction is alpha-D-glucosamine 6-phosphate + H2O = beta-D-fructose 6-phosphate + NH4(+). It participates in amino-sugar metabolism; N-acetylneuraminate degradation; D-fructose 6-phosphate from N-acetylneuraminate: step 5/5. With respect to regulation, allosterically activated by N-acetylglucosamine 6-phosphate (GlcNAc6P). Catalyzes the reversible isomerization-deamination of glucosamine 6-phosphate (GlcN6P) to form fructose 6-phosphate (Fru6P) and ammonium ion. The sequence is that of Glucosamine-6-phosphate deaminase from Glaesserella parasuis serovar 5 (strain SH0165) (Haemophilus parasuis).